Consider the following 310-residue polypeptide: Quinolinate synthase (310 aa).

2 residues coordinate iminosuccinate: His27 and Ser44. Position 89 (Cys89) interacts with [4Fe-4S] cluster. Iminosuccinate contacts are provided by residues 115–117 (YVN) and Ser132. Cys175 serves as a coordination point for [4Fe-4S] cluster. Residues 201–203 (HPE) and Thr222 contribute to the iminosuccinate site. Residue Cys267 participates in [4Fe-4S] cluster binding.

The protein belongs to the quinolinate synthase family. Type 2 subfamily. [4Fe-4S] cluster is required as a cofactor.

The protein localises to the cytoplasm. It carries out the reaction iminosuccinate + dihydroxyacetone phosphate = quinolinate + phosphate + 2 H2O + H(+). It functions in the pathway cofactor biosynthesis; NAD(+) biosynthesis; quinolinate from iminoaspartate: step 1/1. Functionally, catalyzes the condensation of iminoaspartate with dihydroxyacetone phosphate to form quinolinate. This is Quinolinate synthase from Thermus thermophilus (strain ATCC 27634 / DSM 579 / HB8).